The following is a 181-amino-acid chain: MAGKAGRKQASSNAKIIQGLYKQVSLFLGMAIVRLFISRKVTIGQWIKLVALNVPMFVALYIIVLSGKPKYDGNRVVKQGIDLNDNTNLISYFFDLIYLSLFGNIGIIAFRTFKFWWCLLLCPIYAGYKLYGLKNMFMPGAQQTQADNRSKNANEGQSKSKRQMKRERRGETDSKIKYKYR.

Residues 1 to 15 are Cytoplasmic-facing; it reads MAGKAGRKQASSNAK. A helical membrane pass occupies residues 16–36; it reads IIQGLYKQVSLFLGMAIVRLF. Topologically, residues 37-45 are lumenal; that stretch reads ISRKVTIGQ. The helical transmembrane segment at 46 to 66 threads the bilayer; sequence WIKLVALNVPMFVALYIIVLS. At 67 to 89 the chain is on the cytoplasmic side; that stretch reads GKPKYDGNRVVKQGIDLNDNTNL. Residues 90 to 110 traverse the membrane as a helical segment; that stretch reads ISYFFDLIYLSLFGNIGIIAF. Over 111 to 112 the chain is Lumenal; it reads RT. Residues 113-133 traverse the membrane as a helical segment; it reads FKFWWCLLLCPIYAGYKLYGL. Residues 134 to 181 lie on the Cytoplasmic side of the membrane; it reads KNMFMPGAQQTQADNRSKNANEGQSKSKRQMKRERRGETDSKIKYKYR. Positions 144-157 are enriched in polar residues; the sequence is TQADNRSKNANEGQ. The segment at 144-181 is disordered; sequence TQADNRSKNANEGQSKSKRQMKRERRGETDSKIKYKYR. The segment covering 168-181 has biased composition (basic and acidic residues); that stretch reads RRGETDSKIKYKYR.

Belongs to the TMEM208 family. Interacts with SND1, PHO88/SND3 and the translocon complex subunit SEC61. ENV10/SND2 and PHO88/SND3 form a complex with the translocon in the endoplasmic reticulum membrane.

It is found in the endoplasmic reticulum membrane. In terms of biological role, functions in the SND pathway, a SRP (signal recognition particle) and GET (guided entry of tail-anchored proteins) independent pathway for targeting a broad range of substrate proteins to the endoplasmic reticulum. SND functions in parallel to GET in targeting proteins with downstream hydrophobic motifs. Involved in vacuolar processing and morphology. This is SRP-independent targeting protein 2 from Saccharomyces cerevisiae (strain ATCC 204508 / S288c) (Baker's yeast).